The primary structure comprises 344 residues: Ion-translocating oxidoreductase complex subunit D (344 aa).

4 helical membrane passes run 23 to 43 (LVLG…GPGT), 44 to 64 (LLNL…MLAL), 77 to 99 (SALV…WLTL), and 120 to 140 (PFNP…LEMT). Thr172 bears the FMN phosphoryl threonine mark. 5 helical membrane-spanning segments follow: residues 198–218 (LGSA…LFLL), 222–242 (LFTW…SLLF), 252–272 (GSPL…FIVT), 285–305 (LVFG…GGYP), and 306–326 (DGMA…DYYT).

The protein belongs to the NqrB/RnfD family. The complex is composed of six subunits: RnfA, RnfB, RnfC, RnfD, RnfE and RnfG. It depends on FMN as a cofactor.

The protein resides in the cell inner membrane. Its function is as follows. Part of a membrane-bound complex that couples electron transfer with translocation of ions across the membrane. The sequence is that of Ion-translocating oxidoreductase complex subunit D from Pseudomonas aeruginosa (strain LESB58).